The primary structure comprises 193 residues: MNQPPMLDIFRSTGALLEGHFKLTSGRHSNTYFQCAKVLQHPEHLSAVCHKIAAHFSQKGVDTVISPAIGGIVAGTETGRQLGVKTIFAERKDGRMTIRRGFSVAPGEKVLVIEDVITTGGSVQEVIELLKNAGALIIGVGCVVDRSNGKVRLTDDQYAVLSMEVVSYAPEECPLCKEGMPIDAPGSRANQQP.

Residue 114–122 (EDVITTGGS) participates in 5-phospho-alpha-D-ribose 1-diphosphate binding. The orotate site is built by threonine 118 and arginine 146.

Belongs to the purine/pyrimidine phosphoribosyltransferase family. PyrE subfamily. As to quaternary structure, homodimer. Mg(2+) serves as cofactor.

The catalysed reaction is orotidine 5'-phosphate + diphosphate = orotate + 5-phospho-alpha-D-ribose 1-diphosphate. It participates in pyrimidine metabolism; UMP biosynthesis via de novo pathway; UMP from orotate: step 1/2. Catalyzes the transfer of a ribosyl phosphate group from 5-phosphoribose 1-diphosphate to orotate, leading to the formation of orotidine monophosphate (OMP). This is Orotate phosphoribosyltransferase from Chlorobium phaeobacteroides (strain DSM 266 / SMG 266 / 2430).